A 267-amino-acid polypeptide reads, in one-letter code: Type III pantothenate kinase (267 aa).

6 to 13 provides a ligand contact to ATP; sequence DSGNSRLK. Substrate is bound by residues Tyr96 and 103–106; that span reads GADR. Asp105 (proton acceptor) is an active-site residue. Residue Thr131 participates in ATP binding. Thr181 provides a ligand contact to substrate.

Belongs to the type III pantothenate kinase family. In terms of assembly, homodimer. NH4(+) serves as cofactor. It depends on K(+) as a cofactor.

It localises to the cytoplasm. It carries out the reaction (R)-pantothenate + ATP = (R)-4'-phosphopantothenate + ADP + H(+). It functions in the pathway cofactor biosynthesis; coenzyme A biosynthesis; CoA from (R)-pantothenate: step 1/5. Functionally, catalyzes the phosphorylation of pantothenate (Pan), the first step in CoA biosynthesis. In terms of biological role, activates transcription of the pertussis toxin operon in a BvgAS-dependent manner. May interact with the alpha subunit of RNA polymerase. This chain is Type III pantothenate kinase (coaX), found in Bordetella pertussis (strain Tohama I / ATCC BAA-589 / NCTC 13251).